The following is a 461-amino-acid chain: Xyloglucan 6-xylosyltransferase 2 (461 aa).

Residues 1 to 20 are Cytoplasmic-facing; sequence MIERCLGAYRCRRIQRALRQ. A helical; Signal-anchor for type II membrane protein membrane pass occupies residues 21-40; sequence LKVTILCLLLTVVVLRSTIG. Topologically, residues 41-461 are lumenal; that stretch reads AGKFGTPEQD…KAVKVQTNQV (421 aa). The segment at 74-95 is disordered; sequence QTGGDSSSGDGGGNSGGSNNYE. Asn432 is a glycosylation site (N-linked (GlcNAc...) asparagine).

Belongs to the glycosyltransferase 34 family. In terms of assembly, homodimer. Interacts with XXT1 and XXT5. Interacts with FUT1 and XLT2.

Its subcellular location is the golgi apparatus membrane. The enzyme catalyses Transfers an alpha-D-xylosyl residue from UDP-D-xylose to a glucose residue in xyloglucan, forming an alpha-(1-&gt;6)-D-xylosyl-D-glucose linkage.. Its function is as follows. Xylosyltransferase specific to UDP-D-xylose that accepts both cellopentaose and cellohexaose as substrates, with a better use of cellohexaose, to produce xyloglucan. Adds preferentially the first xylosyl residue to the fourth glucosyl residue from the reducing end of both acceptors. Transfer one xylose mainly to the second glucose residue from the non-reducing end. The acceptor should have a minimum of four glucose residues. Associates with other xyloglucan-synthesizing enzymes to form multiprotein complexes for xyloglucan synthesis in the Golgi. This chain is Xyloglucan 6-xylosyltransferase 2 (XXT2), found in Arabidopsis thaliana (Mouse-ear cress).